Here is an 83-residue protein sequence, read N- to C-terminus: Cytochrome b559 subunit alpha (83 aa).

A helical transmembrane segment spans residues 21-35 (VIHSITIPSLFIAGW). A heme-binding site is contributed by His-23.

It belongs to the PsbE/PsbF family. As to quaternary structure, heterodimer of an alpha subunit and a beta subunit. PSII is composed of 1 copy each of membrane proteins PsbA, PsbB, PsbC, PsbD, PsbE, PsbF, PsbH, PsbI, PsbJ, PsbK, PsbL, PsbM, PsbT, PsbX, PsbY, PsbZ, Psb30/Ycf12, at least 3 peripheral proteins of the oxygen-evolving complex and a large number of cofactors. It forms dimeric complexes. The cofactor is heme b.

Its subcellular location is the plastid. The protein localises to the chloroplast thylakoid membrane. Its function is as follows. This b-type cytochrome is tightly associated with the reaction center of photosystem II (PSII). PSII is a light-driven water:plastoquinone oxidoreductase that uses light energy to abstract electrons from H(2)O, generating O(2) and a proton gradient subsequently used for ATP formation. It consists of a core antenna complex that captures photons, and an electron transfer chain that converts photonic excitation into a charge separation. The polypeptide is Cytochrome b559 subunit alpha (Pinus koraiensis (Korean pine)).